Reading from the N-terminus, the 185-residue chain is Pyruvate/ketoisovalerate oxidoreductases common subunit gamma (185 aa).

Heterotetramer of one alpha, one beta, one delta and one gamma chain.

It carries out the reaction 2 oxidized [2Fe-2S]-[ferredoxin] + pyruvate + CoA = 2 reduced [2Fe-2S]-[ferredoxin] + acetyl-CoA + CO2 + H(+). The catalysed reaction is 3-methyl-2-oxobutanoate + 2 oxidized [2Fe-2S]-[ferredoxin] + CoA = 2-methylpropanoyl-CoA + 2 reduced [2Fe-2S]-[ferredoxin] + CO2 + H(+). The protein is Pyruvate/ketoisovalerate oxidoreductases common subunit gamma (porG) of Pyrococcus abyssi (strain GE5 / Orsay).